A 77-amino-acid polypeptide reads, in one-letter code: Acyl carrier protein (77 aa).

The region spanning 1–76 (MSLEDDVKSI…DVITYIKTRQ (76 aa)) is the Carrier domain. Position 36 is an O-(pantetheine 4'-phosphoryl)serine (serine 36).

It belongs to the acyl carrier protein (ACP) family. 4'-phosphopantetheine is transferred from CoA to a specific serine of apo-ACP by AcpS. This modification is essential for activity because fatty acids are bound in thioester linkage to the sulfhydryl of the prosthetic group.

It is found in the cytoplasm. It participates in lipid metabolism; fatty acid biosynthesis. Functionally, carrier of the growing fatty acid chain in fatty acid biosynthesis. The protein is Acyl carrier protein of Chlamydia caviae (strain ATCC VR-813 / DSM 19441 / 03DC25 / GPIC) (Chlamydophila caviae).